Consider the following 104-residue polypeptide: Large ribosomal subunit protein uL24 (104 aa).

The protein belongs to the universal ribosomal protein uL24 family. As to quaternary structure, part of the 50S ribosomal subunit.

Functionally, one of two assembly initiator proteins, it binds directly to the 5'-end of the 23S rRNA, where it nucleates assembly of the 50S subunit. Its function is as follows. One of the proteins that surrounds the polypeptide exit tunnel on the outside of the subunit. This Pseudomonas fluorescens (strain Pf0-1) protein is Large ribosomal subunit protein uL24.